The sequence spans 575 residues: Transcription factor E3 (575 aa).

A Phosphoserine; by MTOR modification is found at serine 47. Residues 90 to 126 (ATLSASSSAGGSRTPAMSSSSSSRVLLRQQLMRAQAQ) show a composition bias toward low complexity. Positions 90–153 (ATLSASSSAG…SPAPASPAIS (64 aa)) are disordered. Residues 127 to 136 (EQERRERREQ) are compositionally biased toward basic and acidic residues. Arginine 188 is subject to Asymmetric dimethylarginine. The segment at 211-246 (LASQALTPPPGPASAQPLPAPEAAHTTGPTGSAPNS) is disordered. The strong transcription activation domain stretch occupies residues 260-271 (EIDDVIDEIISL). The residue at position 321 (serine 321) is a Phosphoserine; by MTOR. Lysine 339 is covalently cross-linked (Glycyl lysine isopeptide (Lys-Gly) (interchain with G-Cter in SUMO2)). In terms of domain architecture, bHLH spans 346–399 (QKKDNHNLIERRRRFNINDRIKELGTLIPKSSDPEMRWNKGTILKASVDYIRKL). The Nuclear localization signal motif lies at 356 to 359 (RRRR). The segment at 409-430 (LESRQRSLEQANRSLQLRIQEL) is leucine-zipper. Disordered stretches follow at residues 473-498 (GAAT…PPSD) and 534-575 (GGLS…EEES). Residues 539–575 (GALSPLRAASDPLLSSVSPAVSKASSRRSSFSMEEES) are compositionally biased toward low complexity. A phosphoserine mark is found at serine 542, serine 548, serine 554, serine 556, serine 560, and serine 568.

It belongs to the MiT/TFE family. Homodimer and heterodimer; with TFEB or MITF. Interacts with RRAGC/RagC GDP-bound and RRAGD/RagD GDP-bound; promoting its recruitment to lysosomal membrane in the presence of nutrients. Interacts with TSC22D1; the interaction is enhanced in the presence of TGF-beta. Post-translationally, sumoylated; does not affect dimerization with MITF. Phosphorylation ar Ser-47 and Ser-321 by MTOR via non-canonical mTORC1 pathway regulates its stability and subcellular location, respectively. When nutrients are present, phosphorylation by MTOR at Ser-47 promotes ubiquitination by the SCF(BTRC) complex, followed by degradation. When nutrients are present, phosphorylation by MTOR at Ser-321 also promotes association with 14-3-3/YWHA adapters and retention in the cytosol. Phosphorylation at Ser-47 plays a more critical role than phosphorylation at Ser-321 for TFE3 inactivation. Inhibition of mTORC1, starvation and lysosomal disruption, promotes dephosphorylation and transcription factor activity. In terms of processing, ubiquitinated by the SCF(BTRC) and SCF(FBXW11) complexes following phosphorylation at Ser-47 by MTOR, leading to its degradation by the proteasome. Ubiquitous in fetal and adult tissues.

Its subcellular location is the cytoplasm. The protein localises to the cytosol. The protein resides in the nucleus. It localises to the lysosome membrane. Functionally, transcription factor that acts as a master regulator of lysosomal biogenesis and immune response. Specifically recognizes and binds E-box sequences (5'-CANNTG-3'); efficient DNA-binding requires dimerization with itself or with another MiT/TFE family member such as TFEB or MITF. Involved in the cellular response to amino acid availability by acting downstream of MTOR: in the presence of nutrients, TFE3 phosphorylation by MTOR promotes its inactivation. Upon starvation or lysosomal stress, inhibition of MTOR induces TFE3 dephosphorylation, resulting in transcription factor activity. Specifically recognizes and binds the CLEAR-box sequence (5'-GTCACGTGAC-3') present in the regulatory region of many lysosomal genes, leading to activate their expression, thereby playing a central role in expression of lysosomal genes. Maintains the pluripotent state of embryonic stem cells by promoting the expression of genes such as ESRRB; mTOR-dependent TFE3 cytosolic retention and inactivation promotes exit from pluripotency. Required to maintain the naive pluripotent state of hematopoietic stem cell; mTOR-dependent cytoplasmic retention of TFE3 promotes the exit of hematopoietic stem cell from pluripotency. TFE3 activity is also involved in the inhibition of neuronal progenitor differentiation. Acts as a positive regulator of browning of adipose tissue by promoting expression of target genes; mTOR-dependent phosphorylation promotes cytoplasmic retention of TFE3 and inhibits browning of adipose tissue. In association with TFEB, activates the expression of CD40L in T-cells, thereby playing a role in T-cell-dependent antibody responses in activated CD4(+) T-cells and thymus-dependent humoral immunity. Specifically recognizes the MUE3 box, a subset of E-boxes, present in the immunoglobulin enhancer. It also binds very well to a USF/MLTF site. Promotes TGF-beta-induced transcription of COL1A2; via its interaction with TSC22D1 at E-boxes in the gene proximal promoter. May regulate lysosomal positioning in response to nutrient deprivation by promoting the expression of PIP4P1. This chain is Transcription factor E3, found in Homo sapiens (Human).